A 90-amino-acid chain; its full sequence is uncharacterized protein (90 aa).

The disordered stretch occupies residues 1-26 (MFKRSVSRLFCAPAPAPAPRKQPGGR). A coiled-coil region spans residues 33–66 (NLNQSVKKQLNHLEVLERIKKQRKEQKNNRNQVD).

This is an uncharacterized protein from Dictyostelium discoideum (Social amoeba).